A 324-amino-acid chain; its full sequence is dITP/XTP pyrophosphatase (324 aa).

Positions 1-126 are unknown; sequence MTKSIFEYKD…SDNKSDFGDV (126 aa). The NTP pyrophosphatase stretch occupies residues 127–324; sequence LLIATRNEGK…EVFPAWQNKQ (198 aa). A substrate-binding site is contributed by 131–136; that stretch reads TRNEGK. Asp-193 serves as the catalytic Proton acceptor. Asp-193 contacts Mg(2+). Substrate is bound by residues Ser-194, 277 to 280, Lys-300, and 305 to 306; these read FGYD and HR.

This sequence belongs to the HAM1 NTPase family. As to quaternary structure, homodimer. The cofactor is Mg(2+).

The catalysed reaction is XTP + H2O = XMP + diphosphate + H(+). It catalyses the reaction dITP + H2O = dIMP + diphosphate + H(+). The enzyme catalyses ITP + H2O = IMP + diphosphate + H(+). Its function is as follows. Pyrophosphatase that catalyzes the hydrolysis of nucleoside triphosphates to their monophosphate derivatives, with a high preference for the non-canonical purine nucleotides XTP (xanthosine triphosphate), dITP (deoxyinosine triphosphate) and ITP. Seems to function as a house-cleaning enzyme that removes non-canonical purine nucleotides from the nucleotide pool, thus preventing their incorporation into DNA/RNA and avoiding chromosomal lesions. The chain is dITP/XTP pyrophosphatase from Streptococcus thermophilus (strain CNRZ 1066).